Reading from the N-terminus, the 199-residue chain is Thymidine kinase (199 aa).

ATP-binding positions include 15–22 and 88–91; these read GSMFSGKS and DEIQ. Glu89 functions as the Proton acceptor in the catalytic mechanism. Zn(2+)-binding residues include Cys145, Cys148, Cys183, and His186.

The protein belongs to the thymidine kinase family. As to quaternary structure, homotetramer.

Its subcellular location is the cytoplasm. The enzyme catalyses thymidine + ATP = dTMP + ADP + H(+). This Staphylococcus haemolyticus (strain JCSC1435) protein is Thymidine kinase.